The following is a 187-amino-acid chain: MKLIVGLGNPGRKFKKTRHNIGFFVIDELLQRHKWKLNNSKFEGDYSIEHFDGEKVILLQPQTYMNLSGKSISPLMDYFDIDVDDVIVVYDDLDLPTGKIRLRQKGGHGGHNGVRSTIDHLGTKDFKRVRLGIGRPTNATPVIDYVLGKFPKQETTAVTDSVEKAADAIEAWIKGKPFLEVMNDFNQ.

Phenylalanine 14 provides a ligand contact to tRNA. Histidine 19 functions as the Proton acceptor in the catalytic mechanism. Residues tyrosine 64, asparagine 66, and asparagine 112 each contribute to the tRNA site.

The protein belongs to the PTH family. Monomer.

The protein localises to the cytoplasm. It catalyses the reaction an N-acyl-L-alpha-aminoacyl-tRNA + H2O = an N-acyl-L-amino acid + a tRNA + H(+). Its function is as follows. Hydrolyzes ribosome-free peptidyl-tRNAs (with 1 or more amino acids incorporated), which drop off the ribosome during protein synthesis, or as a result of ribosome stalling. Catalyzes the release of premature peptidyl moieties from peptidyl-tRNA molecules trapped in stalled 50S ribosomal subunits, and thus maintains levels of free tRNAs and 50S ribosomes. This chain is Peptidyl-tRNA hydrolase, found in Oceanobacillus iheyensis (strain DSM 14371 / CIP 107618 / JCM 11309 / KCTC 3954 / HTE831).